The sequence spans 294 residues: Sulfotransferase 1E1 (294 aa).

Position 47–52 (47–52 (KSGTTW)) interacts with 3'-phosphoadenylyl sulfate. Residue 105–107 (KTH) participates in substrate binding. H107 serves as the catalytic Proton acceptor. Residues R129, S137, Y192, 226–231 (TSFQEM), and 256–258 (RKG) contribute to the 3'-phosphoadenylyl sulfate site.

The protein belongs to the sulfotransferase 1 family. In terms of assembly, homodimer. In terms of tissue distribution, liver, intestine and at lower level in the kidney.

It localises to the cytoplasm. Its subcellular location is the cytosol. The enzyme catalyses estrone + 3'-phosphoadenylyl sulfate = estrone 3-sulfate + adenosine 3',5'-bisphosphate + H(+). The catalysed reaction is (24S)-hydroxycholesterol + 3'-phosphoadenylyl sulfate = (24S)-hydroxycholesterol 3-sulfate + adenosine 3',5'-bisphosphate + H(+). It carries out the reaction 17beta-estradiol + 3'-phosphoadenylyl sulfate = 17beta-estradiol 3-sulfate + adenosine 3',5'-bisphosphate + H(+). It catalyses the reaction 3beta-hydroxyandrost-5-en-17-one + 3'-phosphoadenylyl sulfate = dehydroepiandrosterone 3-sulfate + adenosine 3',5'-bisphosphate + H(+). The enzyme catalyses 4-ethylphenol + 3'-phosphoadenylyl sulfate = 4-ethylphenyl sulfate + adenosine 3',5'-bisphosphate + H(+). Its activity is regulated as follows. Inhibited by estradiol. Functionally, sulfotransferase that utilizes 3'-phospho-5'-adenylyl sulfate (PAPS) as sulfonate donor to catalyze the sulfate conjugation of estradiol and estrone. Is a key enzyme in estrogen homeostasis, the sulfation of estrogens leads to their inactivation. Also sulfates dehydroepiandrosterone (DHEA), pregnenolone, (24S)-hydroxycholesterol and xenobiotic compounds like ethinylestradiol, equalenin, diethyl stilbesterol and 1-naphthol at significantly lower efficiency. Does not sulfonate cortisol, testosterone and dopamine. May play a role in gut microbiota-host metabolic interaction. O-sulfonates 4-ethylphenol (4-EP), a dietary tyrosine-derived metabolite produced by gut bacteria. The product 4-EPS crosses the blood-brain barrier and may negatively regulate oligodendrocyte maturation and myelination, affecting the functional connectivity of different brain regions associated with the limbic system. The sequence is that of Sulfotransferase 1E1 (SULT1E1) from Homo sapiens (Human).